Here is a 351-residue protein sequence, read N- to C-terminus: NADP-dependent isopropanol dehydrogenase (351 aa).

Zn(2+) contacts are provided by Cys37, His59, Glu60, and Asp150. Residues 175-178 (IGAV), 198-200 (GSR), Tyr218, 265-267 (INY), and Lys340 contribute to the NADP(+) site.

Belongs to the zinc-containing alcohol dehydrogenase family. Homotetramer. The cofactor is Zn(2+).

The catalysed reaction is propan-2-ol + NADP(+) = acetone + NADPH + H(+). Alcohol dehydrogenase with a preference for medium chain secondary alcohols, such as 2-butanol and isopropanol. Has very low activity with primary alcohols, such as ethanol. Under physiological conditions, the enzyme reduces aldehydes and 2-ketones to produce secondary alcohols. Is active with acetaldehyde and propionaldehyde. This chain is NADP-dependent isopropanol dehydrogenase (adh), found in Clostridium beijerinckii (Clostridium MP).